Reading from the N-terminus, the 140-residue chain is Probable prefoldin subunit 6 (140 aa).

This sequence belongs to the prefoldin subunit beta family. In terms of assembly, heterohexamer of two PFD-alpha type and four PFD-beta type subunits.

In terms of biological role, binds specifically to cytosolic chaperonin (c-CPN) and transfers target proteins to it. Binds to nascent polypeptide chain and promotes folding in an environment in which there are many competing pathways for nonnative proteins. In Dictyostelium discoideum (Social amoeba), this protein is Probable prefoldin subunit 6 (pfdn6).